Reading from the N-terminus, the 122-residue chain is Large ribosomal subunit protein uL24 (122 aa).

This sequence belongs to the universal ribosomal protein uL24 family. In terms of assembly, part of the 50S ribosomal subunit.

In terms of biological role, one of two assembly initiator proteins, it binds directly to the 5'-end of the 23S rRNA, where it nucleates assembly of the 50S subunit. Located at the polypeptide exit tunnel on the outside of the subunit. This chain is Large ribosomal subunit protein uL24, found in Methanosarcina mazei (strain ATCC BAA-159 / DSM 3647 / Goe1 / Go1 / JCM 11833 / OCM 88) (Methanosarcina frisia).